Consider the following 142-residue polypeptide: Transcription antitermination protein NusB (142 aa).

It belongs to the NusB family.

Functionally, involved in transcription antitermination. Required for transcription of ribosomal RNA (rRNA) genes. Binds specifically to the boxA antiterminator sequence of the ribosomal RNA (rrn) operons. The polypeptide is Transcription antitermination protein NusB (Levilactobacillus brevis (strain ATCC 367 / BCRC 12310 / CIP 105137 / JCM 1170 / LMG 11437 / NCIMB 947 / NCTC 947) (Lactobacillus brevis)).